A 618-amino-acid chain; its full sequence is 1-deoxy-D-xylulose-5-phosphate synthase (618 aa).

Residues histidine 72 and 113–115 (GHA) contribute to the thiamine diphosphate site. Aspartate 144 contributes to the Mg(2+) binding site. Thiamine diphosphate contacts are provided by residues 145 to 146 (GA), asparagine 173, histidine 284, and glutamate 359. Asparagine 173 serves as a coordination point for Mg(2+).

The protein belongs to the transketolase family. DXPS subfamily. As to quaternary structure, homodimer. Mg(2+) is required as a cofactor. Thiamine diphosphate serves as cofactor.

The catalysed reaction is D-glyceraldehyde 3-phosphate + pyruvate + H(+) = 1-deoxy-D-xylulose 5-phosphate + CO2. Its pathway is metabolic intermediate biosynthesis; 1-deoxy-D-xylulose 5-phosphate biosynthesis; 1-deoxy-D-xylulose 5-phosphate from D-glyceraldehyde 3-phosphate and pyruvate: step 1/1. Its function is as follows. Catalyzes the acyloin condensation reaction between C atoms 2 and 3 of pyruvate and glyceraldehyde 3-phosphate to yield 1-deoxy-D-xylulose-5-phosphate (DXP). In Dictyoglomus thermophilum (strain ATCC 35947 / DSM 3960 / H-6-12), this protein is 1-deoxy-D-xylulose-5-phosphate synthase.